A 207-amino-acid polypeptide reads, in one-letter code: Reticulon-1-A (207 aa).

Positions 21–207 constitute a Reticulon domain; it reads AIDLLYWRDI…AKIPGTKQKE (187 aa). The next 2 helical transmembrane spans lie at 35–55 and 139–159; these read IVFGSVLLMLFSLIQFSVVSV and VLMWLLTYVGALFNGLTLLIM.

As to expression, expressed in the animal hemisphere (presumptive neural ectoderm) of blastula and gastrula stage embryos, and along the anterior neural border, in the panplacodal primordium, and in the dorsolateral side of archenteron roof of late neurula embryos. At the tailbud stage, expression localizes to the central nervous system, including the spinal cord, prosencephalon, mesencephalon and rhombencephalon, as well as the lateral line placode, otic vesicle and pronephros.

The protein localises to the endoplasmic reticulum membrane. It is found in the nucleus. Inhibits amyloid precursor protein processing, probably by blocking BACE1 activity. This is Reticulon-1-A (rtn1-a) from Xenopus laevis (African clawed frog).